Consider the following 165-residue polypeptide: RNA polymerase II transcriptional coactivator KELP (165 aa).

The region spanning 3–60 (KETKEKIEKTVIEILSESDMKEITEFKVRKLASEKLAIDLSEKSHKAFVRSVVEKFLD) is the DEK-C domain. The interval 66 to 93 (EYENSQVNKEEEDGDKDCGKGNKEFDDD) is disordered.

It belongs to the transcriptional coactivator PC4 family.

It is found in the nucleus. Its function is as follows. General coactivator that functions cooperatively with TAFs and mediates functional interactions between upstream activators and the general transcriptional machinery. Binds single-stranded DNA. This Arabidopsis thaliana (Mouse-ear cress) protein is RNA polymerase II transcriptional coactivator KELP (KELP).